A 452-amino-acid polypeptide reads, in one-letter code: Mitochondrial import inner membrane translocase subunit TIM50 (452 aa).

Residues 1-23 (MSLSKLTQTCFSRHQAKTFIRLY) constitute a mitochondrion transit peptide. Residues 24 to 167 (SSDFKSLLGP…RRKRMERNTR (144 aa)) are Mitochondrial matrix-facing. Disordered stretches follow at residues 96–115 (IEAEKVLSSPPPAPAPTSSA) and 130–153 (ESAASKSSSSSGGSSDNSDPGNAE). Over residues 131-144 (SAASKSSSSSGGSS) the composition is skewed to low complexity. A helical transmembrane segment spans residues 168 to 188 (IGAYVLFGGSIIGFISFCFYY). Residues 189–452 (GRAQRDEFGN…LFGSRRHVNA (264 aa)) are Mitochondrial intermembrane-facing. In terms of domain architecture, FCP1 homology spans 243–387 (YLQPKYTIVI…VDLAELLKTI (145 aa)).

This sequence belongs to the TIM50 family.

It is found in the mitochondrion inner membrane. Functionally, essential component of the TIM23 complex, a complex that mediates the translocation of transit peptide-containing proteins across the mitochondrial inner membrane. This chain is Mitochondrial import inner membrane translocase subunit TIM50 (scpl-4), found in Caenorhabditis elegans.